We begin with the raw amino-acid sequence, 117 residues long: NADH-ubiquinone oxidoreductase chain 3 (117 aa).

Helical transmembrane passes span 1–21 (MLMLSTMTLIIFIITIVVMML), 58–78 (FLIAIIFLIFDVEIALLLPMI), and 86–106 (LMNWTITSLFFIFILLIGLYH).

It belongs to the complex I subunit 3 family.

The protein resides in the mitochondrion membrane. It catalyses the reaction a ubiquinone + NADH + 5 H(+)(in) = a ubiquinol + NAD(+) + 4 H(+)(out). Its function is as follows. Core subunit of the mitochondrial membrane respiratory chain NADH dehydrogenase (Complex I) that is believed to belong to the minimal assembly required for catalysis. Complex I functions in the transfer of electrons from NADH to the respiratory chain. The immediate electron acceptor for the enzyme is believed to be ubiquinone. This chain is NADH-ubiquinone oxidoreductase chain 3 (mt:ND3), found in Anopheles gambiae (African malaria mosquito).